A 728-amino-acid chain; its full sequence is 1,4-alpha-glucan branching enzyme GlgB (728 aa).

The Nucleophile role is filled by Asp-405. The Proton donor role is filled by Glu-458.

Belongs to the glycosyl hydrolase 13 family. GlgB subfamily. In terms of assembly, monomer.

It carries out the reaction Transfers a segment of a (1-&gt;4)-alpha-D-glucan chain to a primary hydroxy group in a similar glucan chain.. The protein operates within glycan biosynthesis; glycogen biosynthesis. Functionally, catalyzes the formation of the alpha-1,6-glucosidic linkages in glycogen by scission of a 1,4-alpha-linked oligosaccharide from growing alpha-1,4-glucan chains and the subsequent attachment of the oligosaccharide to the alpha-1,6 position. In Shigella flexneri, this protein is 1,4-alpha-glucan branching enzyme GlgB.